Here is a 350-residue protein sequence, read N- to C-terminus: DNA polymerase IV (350 aa).

In terms of domain architecture, UmuC spans 4–185 (IIHIDMDCFY…LPLGKLPGIG (182 aa)). Mg(2+)-binding residues include aspartate 8 and aspartate 103. The active site involves glutamate 104.

The protein belongs to the DNA polymerase type-Y family. In terms of assembly, monomer. Mg(2+) serves as cofactor.

It is found in the cytoplasm. It carries out the reaction DNA(n) + a 2'-deoxyribonucleoside 5'-triphosphate = DNA(n+1) + diphosphate. Functionally, poorly processive, error-prone DNA polymerase involved in untargeted mutagenesis. Copies undamaged DNA at stalled replication forks, which arise in vivo from mismatched or misaligned primer ends. These misaligned primers can be extended by PolIV. Exhibits no 3'-5' exonuclease (proofreading) activity. May be involved in translesional synthesis, in conjunction with the beta clamp from PolIII. This chain is DNA polymerase IV, found in Aeromonas hydrophila subsp. hydrophila (strain ATCC 7966 / DSM 30187 / BCRC 13018 / CCUG 14551 / JCM 1027 / KCTC 2358 / NCIMB 9240 / NCTC 8049).